A 320-amino-acid chain; its full sequence is Formimidoylglutamase (320 aa).

His-125, Asp-153, His-155, Asp-157, Asp-244, and Asp-246 together coordinate Mn(2+).

It belongs to the arginase family. It depends on Mn(2+) as a cofactor.

It catalyses the reaction N-formimidoyl-L-glutamate + H2O = formamide + L-glutamate. Its pathway is amino-acid degradation; L-histidine degradation into L-glutamate; L-glutamate from N-formimidoyl-L-glutamate (hydrolase route): step 1/1. Catalyzes the conversion of N-formimidoyl-L-glutamate to L-glutamate and formamide. The protein is Formimidoylglutamase of Rhodococcus opacus (strain B4).